Consider the following 155-residue polypeptide: Small ribosomal subunit protein uS7cz/uS7cy (155 aa).

It belongs to the universal ribosomal protein uS7 family. In terms of assembly, part of the 30S ribosomal subunit.

It is found in the plastid. The protein localises to the chloroplast. Its function is as follows. One of the primary rRNA binding proteins, it binds directly to 16S rRNA where it nucleates assembly of the head domain of the 30S subunit. In Drimys granadensis, this protein is Small ribosomal subunit protein uS7cz/uS7cy (rps7-A).